A 500-amino-acid chain; its full sequence is Anthranilate synthase component 1 (500 aa).

L-tryptophan is bound by residues Ser-49 and 276–278; that span reads PFM. 311–312 contacts chorismate; that stretch reads GT. Residue Glu-338 participates in Mg(2+) binding. Chorismate contacts are provided by residues Tyr-426, Arg-446, 460 to 462, and Gly-462; that span reads GGG. Glu-475 provides a ligand contact to Mg(2+).

Belongs to the anthranilate synthase component I family. In terms of assembly, heterotetramer consisting of two non-identical subunits: a beta subunit (TrpG) and a large alpha subunit (TrpE). Requires Mg(2+) as cofactor.

The enzyme catalyses chorismate + L-glutamine = anthranilate + pyruvate + L-glutamate + H(+). It participates in amino-acid biosynthesis; L-tryptophan biosynthesis; L-tryptophan from chorismate: step 1/5. Feedback inhibited by tryptophan. In terms of biological role, part of a heterotetrameric complex that catalyzes the two-step biosynthesis of anthranilate, an intermediate in the biosynthesis of L-tryptophan. In the first step, the glutamine-binding beta subunit (TrpG) of anthranilate synthase (AS) provides the glutamine amidotransferase activity which generates ammonia as a substrate that, along with chorismate, is used in the second step, catalyzed by the large alpha subunit of AS (TrpE) to produce anthranilate. In the absence of TrpG, TrpE can synthesize anthranilate directly from chorismate and high concentrations of ammonia. In Cereibacter sphaeroides (strain ATCC 17023 / DSM 158 / JCM 6121 / CCUG 31486 / LMG 2827 / NBRC 12203 / NCIMB 8253 / ATH 2.4.1.) (Rhodobacter sphaeroides), this protein is Anthranilate synthase component 1 (trpE).